Reading from the N-terminus, the 550-residue chain is QDLPGTDNSTATLCLGHHAVPNGTIVKTITDDQIEVTNATELVQSSSTGKICNNPHRILDGRDCTLIDALLGDPHCDVFQDETWDLFVERSNAFSNCYPYDVPDYASLRSLVASSGTLEFITEGFTWTGVTQNGGSNACKRGPANGFFSRLNWLTKSGSTYPVLNVTMPNNDNFDKLYIWGVHHPSTNQEQTNLYVQASGRVTVSTRRSQQTIIPNIGSRPWVRGQSGRISIYWTIVKPGDVLVINSNGNLIAPRGYFKMRTGKSSIMRSDALIDTCVSECITPNGSIPNDKPFQNVNKITYGACPKYVKQNTLKLAIGMRNVPEKQTRGLFGAIAGFIENGWEGMIDGWYGFRHQNSEGTGQAADLKSTQAAIDQINGKLNRVIEKTNEKFHQIEKEFSEVEGRIQDLEKYVEDTKIDLWSYNADVLVALENQHTIDLTDSEMNKLFEKTRRQLRENAEDMGNGCFKIYHKCDNACIESIRNGTYDHDIYRDEALNNRFQIKGVELKSGYKDWILWISFAISCFLLCVVLLGFIMWACQRGNIRCNICI.

The Extracellular portion of the chain corresponds to 1 to 514 (QDLPGTDNST…VELKSGYKDW (514 aa)). Residues N8, N22, and N38 are each glycosylated (N-linked (GlcNAc...) asparagine; by host). 6 disulfide bridges follow: C14–C466, C52–C277, C64–C76, C97–C139, C281–C305, and C473–C477. N-linked (GlcNAc...) asparagine; by host glycans are attached at residues N165 and N285. N-linked (GlcNAc...) asparagine; by host glycosylation occurs at N483. The helical transmembrane segment at 515–535 (ILWISFAISCFLLCVVLLGFI) threads the bilayer. Over 536 to 550 (MWACQRGNIRCNICI) the chain is Cytoplasmic. S-palmitoyl cysteine; by host attachment occurs at residues C539, C546, and C549.

This sequence belongs to the influenza viruses hemagglutinin family. In terms of assembly, homotrimer of disulfide-linked HA1-HA2. Palmitoylated. In terms of processing, in natural infection, inactive HA is matured into HA1 and HA2 outside the cell by one or more trypsin-like, arginine-specific endoprotease secreted by the bronchial epithelial cells. One identified protease that may be involved in this process is secreted in lungs by club cells.

The protein resides in the virion membrane. It localises to the host apical cell membrane. In terms of biological role, binds to sialic acid-containing receptors on the cell surface, bringing about the attachment of the virus particle to the cell. This attachment induces virion internalization either through clathrin-dependent endocytosis or through clathrin- and caveolin-independent pathway. Plays a major role in the determination of host range restriction and virulence. Class I viral fusion protein. Responsible for penetration of the virus into the cell cytoplasm by mediating the fusion of the membrane of the endocytosed virus particle with the endosomal membrane. Low pH in endosomes induces an irreversible conformational change in HA2, releasing the fusion hydrophobic peptide. Several trimers are required to form a competent fusion pore. This is Hemagglutinin from Influenza A virus (strain A/Duck/Hong Kong/64/1976 H3).